The chain runs to 221 residues: ATP phosphoribosyltransferase (221 aa).

Belongs to the ATP phosphoribosyltransferase family. Short subfamily. Heteromultimer composed of HisG and HisZ subunits.

The protein localises to the cytoplasm. The enzyme catalyses 1-(5-phospho-beta-D-ribosyl)-ATP + diphosphate = 5-phospho-alpha-D-ribose 1-diphosphate + ATP. The protein operates within amino-acid biosynthesis; L-histidine biosynthesis; L-histidine from 5-phospho-alpha-D-ribose 1-diphosphate: step 1/9. Its function is as follows. Catalyzes the condensation of ATP and 5-phosphoribose 1-diphosphate to form N'-(5'-phosphoribosyl)-ATP (PR-ATP). Has a crucial role in the pathway because the rate of histidine biosynthesis seems to be controlled primarily by regulation of HisG enzymatic activity. This Anaeromyxobacter dehalogenans (strain 2CP-C) protein is ATP phosphoribosyltransferase.